The sequence spans 420 residues: 3-oxoacyl-[acyl-carrier-protein] synthase 2 (420 aa).

Positions 13–419 (FPNVVVTGIA…GHNVAIAFGC (407 aa)) constitute a Ketosynthase family 3 (KS3) domain. Residues Cys173, His314, and His349 each act as for beta-ketoacyl synthase activity in the active site.

It belongs to the thiolase-like superfamily. Beta-ketoacyl-ACP synthases family.

The protein resides in the cytoplasm. It catalyses the reaction an ultra-long-chain di-unsaturated fatty acyl-[ACP] + malonyl-[ACP] + H(+) = a 3-oxo-ultra-long-chain di-unsaturated fatty acyl-[ACP] + holo-[ACP] + CO2. It participates in lipid metabolism; mycolic acid biosynthesis. Part of the mycobacterial fatty acid elongation system FAS-II, which is involved in mycolic acid biosynthesis. Catalyzes the elongation of long chain acyl-ACP substrates by the addition of two carbons from malonyl-ACP to an acyl acceptor. Involved in extension of the mycolate chains to full lengths and produces longer chain multiunsaturated hydrocarbons averaging 54 carbons in length. The protein is 3-oxoacyl-[acyl-carrier-protein] synthase 2 (kasB) of Mycobacterium leprae (strain TN).